Here is a 320-residue protein sequence, read N- to C-terminus: Olfactory receptor 51E2 (320 aa).

Residues 1–27 (MSSCNFTHATFLLIGIPGLEEAHFWFG) are Extracellular-facing. N-linked (GlcNAc...) asparagine glycosylation occurs at N5. A helical transmembrane segment spans residues 28–48 (FPLLSMYAVALFGNCIVVFIV). The Cytoplasmic portion of the chain corresponds to 49–53 (RTERS). The chain crosses the membrane as a helical span at residues 54-74 (LHAPMYLFLCMLAAIDLALST). Over 75-98 (STMPKILALFWFDSREITFDACLA) the chain is Extracellular. C96 and C178 form a disulfide bridge. Residues 99-119 (QMFFIHTLSAIESTILLAMAF) traverse the membrane as a helical segment. At 120–141 (DRYVAICHPLRHAAVLNNTVTV) the chain is on the cytoplasmic side. Residues 142–162 (QIGMVALVRGSLFFFPLPLLI) form a helical membrane-spanning segment. Over 163–200 (KRLAFCHSNVLSHSYCVHQDVMKLAYTDTLPNVVYGLT) the chain is Extracellular. Residues 201–221 (AILLVMGVDVMFISLSYFLII) traverse the membrane as a helical segment. The Cytoplasmic segment spans residues 222–239 (RTVLQLPSKSERAKAFGT). Residues 240-260 (CVSHISVVLAFYVPLIGLSVV) traverse the membrane as a helical segment. At 261 to 269 (HRFGNSLDP) the chain is on the extracellular side. The helical transmembrane segment at 270-290 (IVHVLMGDVYLLLPPVINPII) threads the bilayer. The Cytoplasmic segment spans residues 291 to 320 (YGAKTKQIRTRVLAMFKISCDKDIEAGGNT).

The protein belongs to the G-protein coupled receptor 1 family. In terms of tissue distribution, in brain, expressed in medulla oblongata by cells close to the fourth ventricle, in the area postrema, the nucleus tractus solitarius. Expressed in olfactory epithelium and vomeronasal organ. Expressed in kidney by large renal vessels, renal afferent arterioles, and extrarenal vascular beds. In small resistance vessels the expression is restricted to cells of the juxtaglomerular afferent arteriole, which mediate renin secretion. Also detected in small blood vessels in a variety of tissues including heart, diaphragm, skeletal muscle, and skin. In the heart, esophagus, and stomach it is detected in axons of autonomic neurons and neurons of the enteric plexus. Also detected in colon and liver. Expressed in the glomus cells of the carotid body.

The protein resides in the cell membrane. Its subcellular location is the early endosome membrane. Functionally, olfactory receptor. The activity of this receptor is probably mediated by G-proteins which induce elevation of intracellular Ca(2+), cAMP and activation of phosphorylation of the protein kinases PKA and MAPK3/MAPK1. Activation of OR51E2 may affect melanocyte proliferation, differentiation, and melanogenesis and may increase proliferation and migration of primary retinal pigment epithelial (RPE) cells. Activated by the short chain fatty acids (SCFA), acetate and propionate. In response to SCFA, may positively regulate renin secretion and increase blood pressure. May also be activated by steroid hormones and regulate cell proliferation. Activated by L-lactate in glomus cells. This is Olfactory receptor 51E2 (Or51e2) from Mus musculus (Mouse).